A 728-amino-acid chain; its full sequence is 1,4-alpha-glucan branching enzyme GlgB (728 aa).

D405 (nucleophile) is an active-site residue. Residue E458 is the Proton donor of the active site.

Belongs to the glycosyl hydrolase 13 family. GlgB subfamily. As to quaternary structure, monomer.

The catalysed reaction is Transfers a segment of a (1-&gt;4)-alpha-D-glucan chain to a primary hydroxy group in a similar glucan chain.. Its pathway is glycan biosynthesis; glycogen biosynthesis. In terms of biological role, catalyzes the formation of the alpha-1,6-glucosidic linkages in glycogen by scission of a 1,4-alpha-linked oligosaccharide from growing alpha-1,4-glucan chains and the subsequent attachment of the oligosaccharide to the alpha-1,6 position. This chain is 1,4-alpha-glucan branching enzyme GlgB, found in Salmonella typhi.